We begin with the raw amino-acid sequence, 311 residues long: MSQNQEISKKEQYNLNKLQKRLRRNVGEAIADFNMIEEGDRIMVCLSGGKDSYTMLEILRNLQQSAPINFSLVAVNLDQKQPGFPEHVLPEYLETLGVEYKIVEENTYGIVKEKIPEGKTTCSLCSRLRRGILYRTATELGATKIALGHHRDDILQTLFLNMFYGGKMKGMPPKLMSDDGKHIVIRPLAYCREKDIQRFADAKAFPIIPCNLCGSQPNLQRQVIADMLRDWDKRYPGRIETMFSAMQNVVPSHLCDTNLFDFKGITHGSEVVNGGDLAFDREEIPLQPAGWQPEEDENQLDELRLNVVEVK.

The PP-loop motif signature appears at 47-52; the sequence is SGGKDS. [4Fe-4S] cluster contacts are provided by C122, C125, and C213.

Belongs to the TtcA family. Homodimer. Mg(2+) serves as cofactor. The cofactor is [4Fe-4S] cluster.

The protein localises to the cytoplasm. It catalyses the reaction cytidine(32) in tRNA + S-sulfanyl-L-cysteinyl-[cysteine desulfurase] + AH2 + ATP = 2-thiocytidine(32) in tRNA + L-cysteinyl-[cysteine desulfurase] + A + AMP + diphosphate + H(+). The protein operates within tRNA modification. In terms of biological role, catalyzes the ATP-dependent 2-thiolation of cytidine in position 32 of tRNA, to form 2-thiocytidine (s(2)C32). The sulfur atoms are provided by the cysteine/cysteine desulfurase (IscS) system. This is tRNA-cytidine(32) 2-sulfurtransferase from Escherichia coli (strain SMS-3-5 / SECEC).